We begin with the raw amino-acid sequence, 67 residues long: Large ribosomal subunit protein uL29 (67 aa).

It belongs to the universal ribosomal protein uL29 family.

In Acetivibrio thermocellus (strain ATCC 27405 / DSM 1237 / JCM 9322 / NBRC 103400 / NCIMB 10682 / NRRL B-4536 / VPI 7372) (Clostridium thermocellum), this protein is Large ribosomal subunit protein uL29.